A 302-amino-acid chain; its full sequence is D-alanine--D-alanine ligase (302 aa).

The 200-residue stretch at 99-298 folds into the ATP-grasp domain; the sequence is KRLFVAEGIP…FEQLIQRIID (200 aa). 128-183 lines the ATP pocket; it reads LAALGSPVVVKPADGGSTVGVTIAREAGHLPEAVRLALQYSPQVLIEQYIPGQEIT. The Mg(2+) site is built by D252, E265, and N267.

It belongs to the D-alanine--D-alanine ligase family. Requires Mg(2+) as cofactor. It depends on Mn(2+) as a cofactor.

It localises to the cytoplasm. It carries out the reaction 2 D-alanine + ATP = D-alanyl-D-alanine + ADP + phosphate + H(+). It functions in the pathway cell wall biogenesis; peptidoglycan biosynthesis. Cell wall formation. This is D-alanine--D-alanine ligase from Gloeobacter violaceus (strain ATCC 29082 / PCC 7421).